The following is an 880-amino-acid chain: Pentatricopeptide repeat-containing protein At3g07290, mitochondrial (880 aa).

Residues M1–F89 constitute a mitochondrion transit peptide. PPR repeat units follow at residues N159–V193, G194–L228, D229–E259, N265–P299, S300–P334, N335–P369, S370–P404, N405–P439, D440–P474, D475–L509, D510–T544, T545–P579, S580–P614, N615–P649, N650–L684, N685–P721, I738–R768, L772–P806, and S807–E842.

This sequence belongs to the PPR family. P subfamily.

It localises to the mitochondrion. This is Pentatricopeptide repeat-containing protein At3g07290, mitochondrial from Arabidopsis thaliana (Mouse-ear cress).